Reading from the N-terminus, the 260-residue chain is MAKEWGYASHNGPDHWHELFPNAKGENQSPVELHTKDIRHDPSLQPWSVSYDGGSAKTILNNGKTCRVVFDDTYDRSMLRGGPLPGPYRLRQFHLHWGSSDDHGSEHTVDGVKYAAELHLVHWNPKYNTFKEALKQRDGIAVIGIFLKIGHENGEFQIFLDALDKIKTKGKEAPFTKFDPSCLFPACRDYWTYQGSFTTPPCEECIVWLLLKEPMTVSSDQMAKLRSLLSSAENEPPVPLVSNWRPPQPINNRVVRASFK.

Position 2 is an N-acetylalanine (Ala2). Positions 3 to 259 (KEWGYASHNG…INNRVVRASF (257 aa)) constitute an Alpha-carbonic anhydrase domain. Phosphoserine occurs at positions 29, 43, 48, 50, and 55. Residues 64-67 (KTCR) are involved in proton transfer. The residue at position 73 (Thr73) is a Phosphothreonine. 3 residues coordinate Zn(2+): His94, His96, and His119. Position 127 is a phosphotyrosine (Tyr127). Thr129 and Thr176 each carry phosphothreonine. An S-glutathionyl cysteine mark is found at Cys182 and Cys187. Position 198–199 (198–199 (TT)) interacts with substrate. Thr216 carries the post-translational modification Phosphothreonine. Ser219 carries the post-translational modification Phosphoserine.

The protein belongs to the alpha-carbonic anhydrase family. The cofactor is Zn(2+). S-thiolated both by thiol-disulfide exchange with glutathione disulfide and by oxyradical-initiated S-thiolation with reduced glutathione. In terms of processing, S-glutathionylated in hepatocytes under oxidative stress. In terms of tissue distribution, muscle specific.

It is found in the cytoplasm. The enzyme catalyses hydrogencarbonate + H(+) = CO2 + H2O. Its activity is regulated as follows. Activated by proton donors such as imidazole and the dipeptide histidylhistidine. Inhibited by coumarins and sulfonamide derivatives such as acetazolamide. Reversible hydration of carbon dioxide. In Homo sapiens (Human), this protein is Carbonic anhydrase 3.